The following is a 302-amino-acid chain: Putative RING-H2 finger protein ATL35 (302 aa).

Residues Met-1 to Cys-31 form the signal peptide. A helical membrane pass occupies residues Thr-50 to Leu-70. The RING-type; atypical zinc finger occupies Cys-123–Arg-165. Ser-226 is subject to Phosphoserine.

This sequence belongs to the RING-type zinc finger family. ATL subfamily.

It is found in the membrane. It catalyses the reaction S-ubiquitinyl-[E2 ubiquitin-conjugating enzyme]-L-cysteine + [acceptor protein]-L-lysine = [E2 ubiquitin-conjugating enzyme]-L-cysteine + N(6)-ubiquitinyl-[acceptor protein]-L-lysine.. It participates in protein modification; protein ubiquitination. The protein is Putative RING-H2 finger protein ATL35 (ATL35) of Arabidopsis thaliana (Mouse-ear cress).